The following is an 807-amino-acid chain: Leucine-rich repeat-containing protein 41 (807 aa).

The interaction with Elongin BC complex stretch occupies residues 45–54 (ALFELCGRAV). Phosphoserine occurs at positions 155, 276, and 326. Disordered stretches follow at residues 269-290 (ASRG…RRPR), 304-335 (TRRK…AIGG), and 349-403 (ASGT…GSGA). Position 327 is a phosphothreonine (Thr327). Residues 352-381 (TKQPSAPAAASASSSTSSKRAPASSASQPK) show a composition bias toward low complexity. Residue Ser368 is modified to Phosphoserine. Residues 382 to 396 (PLKRFKRAAGKKGPR) show a composition bias toward basic residues. 7 LRR repeats span residues 482 to 502 (WVSL…IFRL), 513 to 525 (AGCR…LSDL), 526 to 550 (FSPL…VLSI), 608 to 632 (SGSL…LVLQ), 638 to 661 (NLSL…VLFL), 696 to 723 (NSTL…VFSE), and 726 to 747 (SSSL…LLEF).

As to quaternary structure, part of an E3 ubiquitin-protein ligase complex with Elongin BC (ELOB and ELOC), RBX1 and CUL5. Component of a probable ECS(LRRC41) complex which contains CUL5, RNF7/RBX2, Elongin BC and LRRC41. Interacts with CUL5, RNF7, ELOB and ELOC.

The protein operates within protein modification; protein ubiquitination. Probable substrate recognition component of an ECS (Elongin BC-CUL2/5-SOCS-box protein) E3 ubiquitin ligase complex which mediates the ubiquitination and subsequent proteasomal degradation of target proteins. This chain is Leucine-rich repeat-containing protein 41 (Lrrc41), found in Mus musculus (Mouse).